Reading from the N-terminus, the 251-residue chain is Uroporphyrinogen-III C-methyltransferase (251 aa).

Residues Pro17, Gly93–Asp95, Thr123–Ser124, Met177, and Ala206 each bind S-adenosyl-L-homocysteine.

Belongs to the precorrin methyltransferase family.

The protein localises to the plastid. The protein resides in the chloroplast. The catalysed reaction is uroporphyrinogen III + 2 S-adenosyl-L-methionine = precorrin-2 + 2 S-adenosyl-L-homocysteine + H(+). It participates in cofactor biosynthesis; adenosylcobalamin biosynthesis; precorrin-2 from uroporphyrinogen III: step 1/1. The protein operates within porphyrin-containing compound metabolism; siroheme biosynthesis; precorrin-2 from uroporphyrinogen III: step 1/1. In terms of biological role, catalyzes the two successive C-2 and C-7 methylation reactions involved in the conversion of uroporphyrinogen III to precorrin-2 via the intermediate formation of precorrin-1. It is a step in the biosynthesis of both cobalamin (vitamin B12) and siroheme. The sequence is that of Uroporphyrinogen-III C-methyltransferase (cobA) from Cyanidium caldarium (Red alga).